Consider the following 182-residue polypeptide: ATP synthase subunit delta (182 aa).

This sequence belongs to the ATPase delta chain family. As to quaternary structure, F-type ATPases have 2 components, F(1) - the catalytic core - and F(0) - the membrane proton channel. F(1) has five subunits: alpha(3), beta(3), gamma(1), delta(1), epsilon(1). F(0) has three main subunits: a(1), b(2) and c(10-14). The alpha and beta chains form an alternating ring which encloses part of the gamma chain. F(1) is attached to F(0) by a central stalk formed by the gamma and epsilon chains, while a peripheral stalk is formed by the delta and b chains.

Its subcellular location is the cell inner membrane. Its function is as follows. F(1)F(0) ATP synthase produces ATP from ADP in the presence of a proton or sodium gradient. F-type ATPases consist of two structural domains, F(1) containing the extramembraneous catalytic core and F(0) containing the membrane proton channel, linked together by a central stalk and a peripheral stalk. During catalysis, ATP synthesis in the catalytic domain of F(1) is coupled via a rotary mechanism of the central stalk subunits to proton translocation. Functionally, this protein is part of the stalk that links CF(0) to CF(1). It either transmits conformational changes from CF(0) to CF(1) or is implicated in proton conduction. This is ATP synthase subunit delta from Persephonella marina (strain DSM 14350 / EX-H1).